The primary structure comprises 158 residues: Glycine/sarcosine/betaine reductase complex component A1 (158 aa).

U44 is a catalytic residue. A non-standard amino acid (selenocysteine) is located at residue U44.

This sequence belongs to the GrdA family. In terms of assembly, monomer. Component of the glycine, sarcosine and betaine reductase complexes, together with components B and C.

It carries out the reaction acetyl phosphate + [thioredoxin]-disulfide + NH4(+) + H2O = [thioredoxin]-dithiol + glycine + phosphate + H(+). The catalysed reaction is acetyl phosphate + methylamine + [thioredoxin]-disulfide + H2O = sarcosine + [thioredoxin]-dithiol + phosphate + H(+). It catalyses the reaction acetyl phosphate + trimethylamine + [thioredoxin]-disulfide + H2O = glycine betaine + [thioredoxin]-dithiol + phosphate + H(+). In terms of biological role, in the first step of glycine, betaine and sarcosine reductases, the substrate is bound to component PB via a Schiff base intermediate. Then the PB-activated substrate is nucleophilically attacked by the selenol anion of component PA to transform it to a carboxymethylated selenoether and the respective amine. By action of component PC, acetyl phosphate is formed, leaving component PA in its oxidized state. Finally component PA becomes reduced by the thioredoxin system to start a new catalytic cycle of reductive deamination. This is Glycine/sarcosine/betaine reductase complex component A1 (grdA1) from Peptoclostridium acidaminophilum (Eubacterium acidaminophilum).